Here is a 440-residue protein sequence, read N- to C-terminus: Glutamate-1-semialdehyde 2,1-aminomutase (440 aa).

Lys-273 is subject to N6-(pyridoxal phosphate)lysine.

Belongs to the class-III pyridoxal-phosphate-dependent aminotransferase family. HemL subfamily. As to quaternary structure, homodimer. It depends on pyridoxal 5'-phosphate as a cofactor.

It localises to the cytoplasm. The enzyme catalyses (S)-4-amino-5-oxopentanoate = 5-aminolevulinate. It functions in the pathway porphyrin-containing compound metabolism; protoporphyrin-IX biosynthesis; 5-aminolevulinate from L-glutamyl-tRNA(Glu): step 2/2. The chain is Glutamate-1-semialdehyde 2,1-aminomutase from Alkaliphilus metalliredigens (strain QYMF).